The sequence spans 367 residues: Adenosine deaminase (367 aa).

Residues histidine 46 and histidine 48 each contribute to the Zn(2+) site. Residues 48–50, aspartate 176, and glycine 205 each bind a purine D-ribonucleoside; that span reads HLD. Residues 174–188 form a gating helix loop; regulates binding affinity for substrates and thus substrate selectivity region; the sequence is TGDGGLSHERMKEAA. Histidine 230 contributes to the Zn(2+) binding site. A purine D-ribonucleoside contacts are provided by glutamate 233, histidine 257, and aspartate 314. Aspartate 314 is a Zn(2+) binding site.

Belongs to the metallo-dependent hydrolases superfamily. Adenosine and AMP deaminases family. Zn(2+) is required as a cofactor.

The enzyme catalyses adenosine + H2O + H(+) = inosine + NH4(+). It catalyses the reaction S-methyl-5'-thioadenosine + H2O + H(+) = S-methyl-5'-thioinosine + NH4(+). Its pathway is purine metabolism; purine nucleoside salvage. With respect to regulation, inhibited by coformycin and methylthiocoformycin (MT-coformycin). Functionally, catalyzes the hydrolytic deamination of adenosine to produce inosine. Unlike mammalian adenosine deaminases, also catalyzes the deamination of 5'-methylthioadenosine (MTA), a by-product of polyamine biosynthesis, to produce 5'-methylthioinosine (MTI). Plays an essential role in the purine salvage pathway which allows the parasite to use host cell purines for the synthesis of nucleic acids. The sequence is that of Adenosine deaminase from Plasmodium falciparum (isolate 3D7).